The following is a 146-amino-acid chain: MVMGLGLFLLVFMLGLGLTLPTLAQDNFRYRDFLAKHYDGTPEGRNDRYCESTMRRRHLTSPCKDTNTFIHGNRHHINAICGDENGNPYGGNLRISKSPFQVTTCKLHGGSPRPPCRYRATRGSRNIVVGCENGLPVHLDESIFRP.

Positions 1–24 (MVMGLGLFLLVFMLGLGLTLPTLA) are cleaved as a signal peptide. Gln25 is modified (pyrrolidone carboxylic acid). His37 functions as the Proton acceptor in the catalytic mechanism. Residue Arg45 participates in tRNA binding. 3 cysteine pairs are disulfide-bonded: Cys50–Cys105, Cys63–Cys116, and Cys81–Cys131. A Nucleolar localization signal motif is present at residues 55–59 (RRRHL). Residues Cys105 and Ile127 each coordinate tRNA. The active-site Proton donor is the His138.

The protein belongs to the pancreatic ribonuclease family. As to quaternary structure, homodimer. Interacts with RNH1; inhibiting ANG ribonuclease activity. Interacts with PCNA.

The protein localises to the secreted. It is found in the nucleus. Its subcellular location is the nucleolus. It localises to the cytoplasm. The protein resides in the stress granule. Its activity is regulated as follows. Has weak tRNA ribonuclease activity by itself due to partial autoinhibition by its C-terminus, which folds into a short alpha-helix that partially occludes the substrate-binding site. In absence of stress, the ribonuclease activity is inhibited by RNH1 in the cytoplasm. In response to stress, dissociates from RNH1 in the cytoplasm and associates with cytoplasmic ribosomes with vacant A-sites: ribosomes directly activate the tRNA ribonuclease activity of ANG by refolding the C-terminal alpha-helix. In response to stress, the angiogenic activity of ANG is inhibited by RNH1 in the nucleus. In terms of biological role, secreted ribonuclease that can either promote or restrict cell proliferation of target cells, depending on the context. Endocytosed in target cells via its receptor PLXNB2 and translocates to the cytoplasm or nucleus. Under stress conditions, localizes to the cytoplasm and promotes the assembly of stress granules (SGs): specifically cleaves a subset of tRNAs within anticodon loops to produce tRNA-derived stress-induced fragments (tiRNAs), resulting in translation repression and inhibition of cell proliferation. tiRNas also prevent formation of apoptosome, thereby promoting cell survival. Preferentially cleaves RNAs between a pyrimidine and an adenosine residue, suggesting that it cleaves the anticodon loop of tRNA(Ala) (32-UUAGCAU-38) after positions 33 and 36. Cleaves a subset of tRNAs, including tRNA(Ala), tRNA(Glu), tRNA(Gly), tRNA(Lys), tRNA(Val), tRNA(His), tRNA(Asp) and tRNA(Sec). Under growth conditions and in differentiated cells, translocates to the nucleus and stimulates ribosomal RNA (rRNA) transcription, including that containing the initiation site sequences of 45S rRNA, thereby promoting cell growth and proliferation. Angiogenin induces vascularization of normal and malignant tissues via its ability to promote rRNA transcription. Involved in hematopoietic stem and progenitor cell (HSPC) growth and survival by promoting rRNA transcription in growth conditions and inhibiting translation in response to stress, respectively. Mediates the crosstalk between myeloid and intestinal epithelial cells to protect the intestinal epithelial barrier integrity: secreted by myeloid cells and promotes intestinal epithelial cells proliferation and survival. Also mediates osteoclast-endothelial cell crosstalk in growing bone: produced by osteoclasts and protects the neighboring vascular cells against senescence by promoting rRNA transcription. This is Angiogenin (ANG) from Papio hamadryas (Hamadryas baboon).